The chain runs to 349 residues: Prostaglandin reductase 1 (349 aa).

Residue threonine 18 is modified to Phosphothreonine. Phosphoserine is present on serine 20. NADP(+) contacts are provided by residues 152–155, lysine 178, tyrosine 193, asparagine 217, 239–245, 270–272, and asparagine 321; these read GAVG, CGAISMY, and FIF. Residue lysine 178 is modified to N6-(2-hydroxyisobutyryl)lysine; alternate. Lysine 178 is modified (N6-acetyllysine; alternate).

The protein belongs to the NADP-dependent oxidoreductase L4BD family. As to quaternary structure, monomer or homodimer.

It localises to the cytoplasm. It carries out the reaction 13,14-dihydro-15-oxo-prostaglandin E1 + NADP(+) = 15-oxoprostaglandin E1 + NADPH + H(+). It catalyses the reaction 13,14-dihydro-15-oxo-prostaglandin E2 + NADP(+) = 15-oxoprostaglandin E2 + NADPH + H(+). The enzyme catalyses 13,14-dihydro-15-oxo-prostaglandin F1alpha + NADP(+) = 15-oxoprostaglandin F1alpha + NADPH + H(+). The catalysed reaction is 13,14-dihydro-15-oxo-PGF2alpha + NADP(+) = 15-oxoprostaglandin F2alpha + NADPH + H(+). It carries out the reaction leukotriene B4 + NADP(+) = 12-oxo-leukotriene B4 + NADPH + H(+). It catalyses the reaction 20-hydroxy-leukotriene B4 + NADP(+) = 12-oxo-20-hydroxy-leukotriene B4 + NADPH + H(+). The enzyme catalyses 6-trans-leukotriene B4 + NADP(+) = 12-oxo-(5S)-hydroxy-(6E,8E,10E,14Z)-eicosatetraenoate + NADPH + H(+). The catalysed reaction is (5S,12S)-dihydroxy-(6E,10E,12E,14Z)-eicosatetraenoate + NADP(+) = 12-oxo-(5S)-hydroxy-(6E,8E,10E,14Z)-eicosatetraenoate + NADPH + H(+). It carries out the reaction an n-alkanal + NADP(+) = an alk-2-enal + NADPH + H(+). It catalyses the reaction hexanal + NADP(+) = (E)-hex-2-enal + NADPH + H(+). The enzyme catalyses octanal + NADP(+) = (2E)-octenal + NADPH + H(+). The catalysed reaction is decanal + NADP(+) = (2E)-decenal + NADPH + H(+). It carries out the reaction dodecanal + NADP(+) = (2E)-dodecenal + NADPH + H(+). It catalyses the reaction 4-hydroxynonanal + NADP(+) = (E)-4-hydroxynon-2-enal + NADPH + H(+). The enzyme catalyses pentan-2-one + NADP(+) = (E)-pent-3-en-2-one + NADPH + H(+). The catalysed reaction is nonan-2-one + NADP(+) = (3E)-nonen-2-one + NADPH + H(+). NAD(P)H-dependent oxidoreductase involved in metabolic inactivation of pro- and anti-inflammatory eicosanoids: prostaglandins (PG), leukotrienes (LT) and lipoxins (LX). Catalyzes with high efficiency the reduction of the 13,14 double bond of 15-oxoPGs, including 15-oxo-PGE1, 15-oxo-PGE2, 15-oxo-PGF1-alpha and 15-oxo-PGF2-alpha. Catalyzes with lower efficiency the oxidation of the hydroxyl group at C12 of LTB4 and its derivatives, converting them into biologically less active 12-oxo-LTB4 metabolites. Reduces 15-oxo-LXA4 to 13,14 dihydro-15-oxo-LXA4, enhancing neutrophil recruitment at the inflammatory site. Plays a role in metabolic detoxification of alkenals and ketones. Reduces alpha,beta-unsaturated alkenals and ketones, particularly those with medium-chain length, showing highest affinity toward (2E)-decenal and (3E)-3-nonen-2-one. May inactivate 4-hydroxy-2-nonenal, a cytotoxic lipid constituent of oxidized low-density lipoprotein particles. This Oryctolagus cuniculus (Rabbit) protein is Prostaglandin reductase 1 (PTGR1).